A 558-amino-acid chain; its full sequence is MAELNTHVNVKEKIYAVRSVVPNKSNNEIVLVLQQFDFNVDKAVQAFVDGSAIQVLKEWNMTGKKKNNKRKRSKSKQHQGNKDAKDKVERPEAGPLQPQPPQIQNGPMNGCEKDSSSTDSANEKPALIPREKKISILEEPSKALRGVTEGNRLLQQKLSLDGNPKPIHGTTERSDGLQWSAEQPCNPSKPKAKTSPVKSNTPAAHLEIKPDELAKKRGPNIEKSVKDLQRCTVSLTRYRVMIKEEVDSSVKKIKAAFAELHNCIIDKEVSLMAEMDKVKEEAMEILTARQKKAEELKRLTDLASQMAEMQLAELRAEIKHFVSERKYDEELGKAARFSCDIEQLKAQIMLCGEITHPKNNYSSRTPCSSLLPLLNAHAATSGKQSNFSRKSSTHNKPSEGKAANPKMVSSLPSTADPSHQTMPANKQNGSSNQRRRFNPQYHNNRLNGPAKSQGSGNEAEPLGKGNSRHEHRRQPHNGFRPKNKGGAKNQEASLGMKTPEAPAHSEKPRRRQHAADTSEARPFRGSVGRVSQCNLCPTRIEVSTDAAVLSVPAVTLVA.

A2 bears the N-acetylalanine mark. The span at 63–79 (GKKKNNKRKRSKSKQHQ) shows a compositional bias: basic residues. Disordered stretches follow at residues 63–134 (GKKK…EKKI) and 157–201 (KLSL…KSNT). Positions 80–92 (GNKDAKDKVERPE) are enriched in basic and acidic residues. Position 120 is a phosphoserine (S120). A coiled-coil region spans residues 271 to 344 (LMAEMDKVKE…ARFSCDIEQL (74 aa)). The tract at residues 380-525 (TSGKQSNFSR…DTSEARPFRG (146 aa)) is disordered. Composition is skewed to polar residues over residues 381–390 (SGKQSNFSRK), 410–432 (SLPS…GSSN), and 440–456 (QYHN…QGSG). S455 carries the phosphoserine modification. The segment covering 469–485 (HEHRRQPHNGFRPKNKG) has biased composition (basic residues). The span at 513 to 522 (HAADTSEARP) shows a compositional bias: basic and acidic residues.

The protein belongs to the SPATS2 family.

The protein resides in the cytoplasm. Its subcellular location is the nucleus. It localises to the nucleolus. In Homo sapiens (Human), this protein is SPATS2-like protein (SPATS2L).